Reading from the N-terminus, the 329-residue chain is 4-hydroxythreonine-4-phosphate dehydrogenase (329 aa).

Substrate-binding residues include histidine 136 and threonine 137. Positions 166, 211, and 266 each coordinate a divalent metal cation. Substrate is bound by residues lysine 274, asparagine 283, and arginine 292.

This sequence belongs to the PdxA family. As to quaternary structure, homodimer. It depends on Zn(2+) as a cofactor. Mg(2+) is required as a cofactor. The cofactor is Co(2+).

The protein resides in the cytoplasm. It catalyses the reaction 4-(phosphooxy)-L-threonine + NAD(+) = 3-amino-2-oxopropyl phosphate + CO2 + NADH. It participates in cofactor biosynthesis; pyridoxine 5'-phosphate biosynthesis; pyridoxine 5'-phosphate from D-erythrose 4-phosphate: step 4/5. Catalyzes the NAD(P)-dependent oxidation of 4-(phosphooxy)-L-threonine (HTP) into 2-amino-3-oxo-4-(phosphooxy)butyric acid which spontaneously decarboxylates to form 3-amino-2-oxopropyl phosphate (AHAP). The sequence is that of 4-hydroxythreonine-4-phosphate dehydrogenase from Escherichia coli (strain K12 / MC4100 / BW2952).